A 724-amino-acid polypeptide reads, in one-letter code: Long-chain-fatty-acid--CoA ligase ACSBG1 (724 aa).

Residues 1 to 51 (MPRNSGAGYGCPHGDPSMLDSRETPQESRQDMTVGTTQEKLKTSSLTDRQP) form a disordered region. Over residues 20–30 (DSRETPQESRQ) the composition is skewed to basic and acidic residues. A compositionally biased stretch (polar residues) spans 31–51 (DMTVGTTQEKLKTSSLTDRQP). Phosphoserine is present on residues Ser53 and Ser56. ATP is bound by residues 282–290 (TSGTTGNPK), 472–477 (AGYGLS), Asp550, and Arg565. A Phosphotyrosine modification is found at Tyr658. Lys701 is a binding site for ATP.

Belongs to the ATP-dependent AMP-binding enzyme family. Bubblegum subfamily.

Its subcellular location is the cytoplasm. The protein resides in the cytoplasmic vesicle. It is found in the microsome. The protein localises to the endoplasmic reticulum. It localises to the cell membrane. It catalyses the reaction a long-chain fatty acid + ATP + CoA = a long-chain fatty acyl-CoA + AMP + diphosphate. The enzyme catalyses (E)-hexadec-2-enoate + ATP + CoA = (2E)-hexadecenoyl-CoA + AMP + diphosphate. The catalysed reaction is hexadecanoate + ATP + CoA = hexadecanoyl-CoA + AMP + diphosphate. Functionally, catalyzes the conversion of fatty acids such as long-chain and very long-chain fatty acids to their active form acyl-CoAs for both synthesis of cellular lipids, and degradation via beta-oxidation. Can activate diverse saturated, monosaturated and polyunsaturated fatty acids. The sequence is that of Long-chain-fatty-acid--CoA ligase ACSBG1 from Macaca fascicularis (Crab-eating macaque).